Reading from the N-terminus, the 269-residue chain is Cbp/p300-interacting transactivator 2 (269 aa).

The disordered stretch occupies residues 142-200; that stretch reads AGHQMNGTNQHFRDCNPKHSGGSSTPGGAGGSGTPGGSGGTSGGAGGSSAGGSGGGSTM. The segment covering 165–198 has biased composition (gly residues); sequence STPGGAGGSGTPGGSGGTSGGAGGSSAGGSGGGS.

The protein belongs to the CITED family. As to quaternary structure, interacts (via C-terminus) with EP300 (via CH1 domain); the interaction is stimulated in response to hypoxia. Interacts with PPARA. Interacts (via C-terminus) with TFAP2A, TFAP2B and TFAP2C. Interacts (via C-terminus) with SMAD2. Interacts (via C-terminus) with SMAD3 (via MH2 domain). Interacts with LHX2 (via LIM domains). Interacts with WT1 isoform 1 and isoform 3. As to expression, ubiquitous.

Its subcellular location is the nucleus. Functionally, transcriptional coactivator of the p300/CBP-mediated transcription complex. Acts as a bridge, linking TFAP2 transcription factors and the p300/CBP transcriptional coactivator complex in order to stimulate TFAP2-mediated transcriptional activation. Positively regulates TGF-beta signaling through its association with the SMAD/p300/CBP-mediated transcriptional coactivator complex. Stimulates the peroxisome proliferator-activated receptors PPARA transcriptional activity. Enhances estrogen-dependent transactivation mediated by estrogen receptors. Also acts as a transcriptional corepressor; interferes with the binding of the transcription factors HIF1A or STAT2 and the p300/CBP transcriptional coactivator complex. Participates in sex determination and early gonad development by stimulating transcription activation of SRY. Plays a role in controlling left-right patterning during embryogenesis; potentiates transcriptional activation of NODAL-mediated gene transcription in the left lateral plate mesoderm (LPM). Plays an essential role in differentiation of the adrenal cortex from the adrenogonadal primordium (AGP); stimulates WT1-mediated transcription activation thereby up-regulating the nuclear hormone receptor NR5A1 promoter activity. Associates with chromatin to the PITX2 P1 promoter region. The protein is Cbp/p300-interacting transactivator 2 (Cited2) of Mus musculus (Mouse).